We begin with the raw amino-acid sequence, 103 residues long: Large ribosomal subunit protein bL21 (103 aa).

Belongs to the bacterial ribosomal protein bL21 family. Part of the 50S ribosomal subunit. Contacts protein L20.

In terms of biological role, this protein binds to 23S rRNA in the presence of protein L20. The chain is Large ribosomal subunit protein bL21 from Methylococcus capsulatus (strain ATCC 33009 / NCIMB 11132 / Bath).